The sequence spans 160 residues: Ribosomal RNA large subunit methyltransferase H (160 aa).

S-adenosyl-L-methionine-binding residues include L76 and G108.

It belongs to the RNA methyltransferase RlmH family. As to quaternary structure, homodimer.

The protein resides in the cytoplasm. It carries out the reaction pseudouridine(1915) in 23S rRNA + S-adenosyl-L-methionine = N(3)-methylpseudouridine(1915) in 23S rRNA + S-adenosyl-L-homocysteine + H(+). In terms of biological role, specifically methylates the pseudouridine at position 1915 (m3Psi1915) in 23S rRNA. In Rhodopseudomonas palustris (strain BisB5), this protein is Ribosomal RNA large subunit methyltransferase H.